A 163-amino-acid chain; its full sequence is Pheromone-binding protein (163 aa).

The first 22 residues, 1–22, serve as a signal peptide directing secretion; the sequence is MMSVRLMLVVAVWLCLRVDASQ. Intrachain disulfides connect cysteine 39-cysteine 74, cysteine 70-cysteine 129, and cysteine 117-cysteine 138.

Belongs to the PBP/GOBP family. Antenna.

Its function is as follows. This major soluble protein in olfactory sensilla of male moths might serve to solubilize the extremely hydrophobic pheromone molecules and to transport pheromone through the aqueous lymph to receptors located on olfactory cilia. This Heliothis virescens (Tobacco budworm moth) protein is Pheromone-binding protein.